A 340-amino-acid chain; its full sequence is Delta(1)-pyrroline-2-carboxylate reductase 2 (340 aa).

Catalysis depends on serine 50, which acts as the Charge relay system. Histidine 51 functions as the Proton donor in the catalytic mechanism. Arginine 55 is a binding site for substrate. 123–127 contacts NADP(+); the sequence is HFSAL. Substrate is bound at residue threonine 163. Position 181-183 (181-183) interacts with NADP(+); sequence DFA. Position 189-190 (189-190) interacts with substrate; it reads RG. Aspartate 191 acts as the Charge relay system in catalysis. NADP(+) contacts are provided by residues 232-233 and 307-313; these read HK and RLPSQRR.

Belongs to the LDH2/MDH2 oxidoreductase family. Homodimer.

It carries out the reaction L-proline + NAD(+) = 1-pyrroline-2-carboxylate + NADH + H(+). It catalyses the reaction L-proline + NADP(+) = 1-pyrroline-2-carboxylate + NADPH + H(+). In terms of biological role, catalyzes the reduction of Delta(1)-pyrroline-2-carboxylate (Pyr2C) to L-proline, using NADPH as the electron donor. May be involved in a degradation pathway that converts trans-3-hydroxy-L-proline (t3LHyp) to L-proline. In Burkholderia multivorans (strain ATCC 17616 / 249), this protein is Delta(1)-pyrroline-2-carboxylate reductase 2.